We begin with the raw amino-acid sequence, 618 residues long: Dihydroxy-acid dehydratase (618 aa).

A Mg(2+)-binding site is contributed by aspartate 81. A [2Fe-2S] cluster-binding site is contributed by cysteine 122. Mg(2+) is bound by residues aspartate 123 and lysine 124. Lysine 124 carries the post-translational modification N6-carboxylysine. Position 195 (cysteine 195) interacts with [2Fe-2S] cluster. Glutamate 490 provides a ligand contact to Mg(2+). Catalysis depends on serine 516, which acts as the Proton acceptor.

This sequence belongs to the IlvD/Edd family. In terms of assembly, homodimer. Requires [2Fe-2S] cluster as cofactor. It depends on Mg(2+) as a cofactor.

The catalysed reaction is (2R)-2,3-dihydroxy-3-methylbutanoate = 3-methyl-2-oxobutanoate + H2O. The enzyme catalyses (2R,3R)-2,3-dihydroxy-3-methylpentanoate = (S)-3-methyl-2-oxopentanoate + H2O. The protein operates within amino-acid biosynthesis; L-isoleucine biosynthesis; L-isoleucine from 2-oxobutanoate: step 3/4. It participates in amino-acid biosynthesis; L-valine biosynthesis; L-valine from pyruvate: step 3/4. Its function is as follows. Functions in the biosynthesis of branched-chain amino acids. Catalyzes the dehydration of (2R,3R)-2,3-dihydroxy-3-methylpentanoate (2,3-dihydroxy-3-methylvalerate) into 2-oxo-3-methylpentanoate (2-oxo-3-methylvalerate) and of (2R)-2,3-dihydroxy-3-methylbutanoate (2,3-dihydroxyisovalerate) into 2-oxo-3-methylbutanoate (2-oxoisovalerate), the penultimate precursor to L-isoleucine and L-valine, respectively. The polypeptide is Dihydroxy-acid dehydratase (Gluconobacter oxydans (strain 621H) (Gluconobacter suboxydans)).